The following is a 509-amino-acid chain: Kynureninase 1 (509 aa).

Pyridoxal 5'-phosphate-binding positions include Leu154, Thr155, 183–186 (FPSD), Asp270, His273, and Tyr295. N6-(pyridoxal phosphate)lysine is present on Lys296. Pyridoxal 5'-phosphate contacts are provided by Trp345 and Asn373.

Belongs to the kynureninase family. In terms of assembly, homodimer. It depends on pyridoxal 5'-phosphate as a cofactor.

The protein localises to the cytoplasm. It carries out the reaction L-kynurenine + H2O = anthranilate + L-alanine + H(+). The enzyme catalyses 3-hydroxy-L-kynurenine + H2O = 3-hydroxyanthranilate + L-alanine + H(+). It participates in amino-acid degradation; L-kynurenine degradation; L-alanine and anthranilate from L-kynurenine: step 1/1. The protein operates within cofactor biosynthesis; NAD(+) biosynthesis; quinolinate from L-kynurenine: step 2/3. Functionally, catalyzes the cleavage of L-kynurenine (L-Kyn) and L-3-hydroxykynurenine (L-3OHKyn) into anthranilic acid (AA) and 3-hydroxyanthranilic acid (3-OHAA), respectively. This Chaetomium globosum (strain ATCC 6205 / CBS 148.51 / DSM 1962 / NBRC 6347 / NRRL 1970) (Soil fungus) protein is Kynureninase 1.